The primary structure comprises 140 residues: Nucleoside triphosphatase NudI (140 aa).

In terms of domain architecture, Nudix hydrolase spans 1-140 (MRHRTIVCPL…RVTLSLKGLL (140 aa)). The short motif at 38–58 (GVEPGERIEEALRREIREELG) is the Nudix box element.

This sequence belongs to the Nudix hydrolase family. NudI subfamily. As to quaternary structure, monomer. The cofactor is Mg(2+).

The enzyme catalyses a ribonucleoside 5'-triphosphate + H2O = a ribonucleoside 5'-phosphate + diphosphate + H(+). The catalysed reaction is a 2'-deoxyribonucleoside 5'-triphosphate + H2O = a 2'-deoxyribonucleoside 5'-phosphate + diphosphate + H(+). It catalyses the reaction dUTP + H2O = dUMP + diphosphate + H(+). It carries out the reaction dTTP + H2O = dTMP + diphosphate + H(+). The enzyme catalyses dCTP + H2O = dCMP + diphosphate + H(+). In terms of biological role, catalyzes the hydrolysis of nucleoside triphosphates, with a preference for pyrimidine deoxynucleoside triphosphates (dUTP, dTTP and dCTP). In Klebsiella pneumoniae subsp. pneumoniae (strain ATCC 700721 / MGH 78578), this protein is Nucleoside triphosphatase NudI.